The following is a 192-amino-acid chain: Cell division protein SepF (192 aa).

The tract at residues 15-70 (GDPLEYEEDGEEYEQVYREENKREEARRATAGTAAAATPTAAAQASDAAPMGSGPA) is disordered. Over residues 18–28 (LEYEEDGEEYE) the composition is skewed to acidic residues. Positions 29 to 42 (QVYREENKREEARR) are enriched in basic and acidic residues. Positions 43-63 (ATAGTAAAATPTAAAQASDAA) are enriched in low complexity.

Belongs to the SepF family. Homodimer. Interacts with FtsZ.

The protein resides in the cytoplasm. Cell division protein that is part of the divisome complex and is recruited early to the Z-ring. Probably stimulates Z-ring formation, perhaps through the cross-linking of FtsZ protofilaments. Its function overlaps with FtsA. The polypeptide is Cell division protein SepF (Gloeobacter violaceus (strain ATCC 29082 / PCC 7421)).